The sequence spans 343 residues: tRNA N6-adenosine threonylcarbamoyltransferase (343 aa).

His120 and His124 together coordinate Fe cation. Substrate-binding positions include 142–146 (VVSGG), Asp175, Gly188, Asp192, and Asn281. A Fe cation-binding site is contributed by Asp310.

This sequence belongs to the KAE1 / TsaD family. Fe(2+) serves as cofactor.

It localises to the cytoplasm. It carries out the reaction L-threonylcarbamoyladenylate + adenosine(37) in tRNA = N(6)-L-threonylcarbamoyladenosine(37) in tRNA + AMP + H(+). Its function is as follows. Required for the formation of a threonylcarbamoyl group on adenosine at position 37 (t(6)A37) in tRNAs that read codons beginning with adenine. Is involved in the transfer of the threonylcarbamoyl moiety of threonylcarbamoyl-AMP (TC-AMP) to the N6 group of A37, together with TsaE and TsaB. TsaD likely plays a direct catalytic role in this reaction. The protein is tRNA N6-adenosine threonylcarbamoyltransferase of Bacillus cereus (strain ATCC 14579 / DSM 31 / CCUG 7414 / JCM 2152 / NBRC 15305 / NCIMB 9373 / NCTC 2599 / NRRL B-3711).